Consider the following 214-residue polypeptide: Probable nicotinate-nucleotide adenylyltransferase (214 aa).

It belongs to the NadD family.

The catalysed reaction is nicotinate beta-D-ribonucleotide + ATP + H(+) = deamido-NAD(+) + diphosphate. The protein operates within cofactor biosynthesis; NAD(+) biosynthesis; deamido-NAD(+) from nicotinate D-ribonucleotide: step 1/1. Catalyzes the reversible adenylation of nicotinate mononucleotide (NaMN) to nicotinic acid adenine dinucleotide (NaAD). The chain is Probable nicotinate-nucleotide adenylyltransferase from Aeromonas salmonicida (strain A449).